The following is a 153-amino-acid chain: Large ribosomal subunit protein bL9 (153 aa).

It belongs to the bacterial ribosomal protein bL9 family.

Functionally, binds to the 23S rRNA. This chain is Large ribosomal subunit protein bL9, found in Blochmanniella pennsylvanica (strain BPEN).